The following is a 1172-amino-acid chain: Lysylphosphatidylglycerol biosynthesis bifunctional protein LysX (1172 aa).

Residues 1-34 (MGLHLTVPGLRRDGRGVQSNSHDTSSKTTADISR) form a disordered region. The interval 1–663 (MGLHLTVPGL…LLHHDGSAPD (663 aa)) is phosphatidylglycerol lysyltransferase. Positions 17-31 (VQSNSHDTSSKTTAD) are enriched in polar residues. The next 7 helical transmembrane spans lie at 80-100 (VPAA…LASV), 122-142 (FPDT…ALTA), 146-166 (IAWL…AAEI), 177-197 (FGEN…VLGY), 214-234 (AVWL…VELF), 272-292 (AIFG…LFLS), and 612-632 (VIPR…LPFS). Positions 664 to 1172 (VSGLRQVGLT…TLPFPLAKPH (509 aa)) are lysine--tRNA ligase. The segment at residues 726–804 (VSVSGRIMRI…SLIVSGWRLI (79 aa)) is a DNA-binding region (OB). Positions 1084 and 1091 each coordinate Mg(2+).

It in the N-terminal section; belongs to the LPG synthetase family. This sequence in the C-terminal section; belongs to the class-II aminoacyl-tRNA synthetase family. Requires Mg(2+) as cofactor.

It localises to the cell membrane. The catalysed reaction is tRNA(Lys) + L-lysine + ATP = L-lysyl-tRNA(Lys) + AMP + diphosphate. It carries out the reaction L-lysyl-tRNA(Lys) + a 1,2-diacyl-sn-glycero-3-phospho-(1'-sn-glycerol) = a 1,2-diacyl-sn-glycero-3-phospho-1'-(3'-O-L-lysyl)-sn-glycerol + tRNA(Lys). Its function is as follows. Catalyzes the production of L-lysyl-tRNA(Lys)transfer and the transfer of a lysyl group from L-lysyl-tRNA(Lys) to membrane-bound phosphatidylglycerol (PG), which produces lysylphosphatidylglycerol (LPG), one of the components of the bacterial membrane with a positive net charge. LPG synthesis contributes to the resistance to cationic antimicrobial peptides (CAMPs) and likely protects M.tuberculosis against the CAMPs produced by competiting microorganisms (bacteriocins). In fact, the modification of anionic phosphatidylglycerol with positively charged L-lysine results in repulsion of the peptides. This chain is Lysylphosphatidylglycerol biosynthesis bifunctional protein LysX (lysX), found in Mycobacterium bovis (strain ATCC BAA-935 / AF2122/97).